The chain runs to 629 residues: tRNA uridine 5-carboxymethylaminomethyl modification enzyme MnmG (629 aa).

FAD is bound by residues 13 to 18 (GGGHAG), Val125, and Ser180. 273-287 (GPRYCPSIEDKVMRF) lines the NAD(+) pocket. Gln370 contacts FAD.

Belongs to the MnmG family. As to quaternary structure, homodimer. Heterotetramer of two MnmE and two MnmG subunits. FAD is required as a cofactor.

The protein localises to the cytoplasm. In terms of biological role, NAD-binding protein involved in the addition of a carboxymethylaminomethyl (cmnm) group at the wobble position (U34) of certain tRNAs, forming tRNA-cmnm(5)s(2)U34. This Salmonella arizonae (strain ATCC BAA-731 / CDC346-86 / RSK2980) protein is tRNA uridine 5-carboxymethylaminomethyl modification enzyme MnmG.